Consider the following 354-residue polypeptide: Holliday junction branch migration complex subunit RuvB (354 aa).

Polar residues predominate over residues 1-10 (MAIKRNQGSN). The segment at 1 to 36 (MAIKRNQGSNPKPEKKERLTKAETHQEQDNLEESIR) is disordered. Positions 12–36 (KPEKKERLTKAETHQEQDNLEESIR) are enriched in basic and acidic residues. The segment at 13-196 (PEKKERLTKA…FGLIQRLKFY (184 aa)) is large ATPase domain (RuvB-L). ATP is bound by residues Ile35, Arg36, Gly77, Lys80, Thr81, Thr82, 143–145 (EDY), Arg186, Tyr196, and Arg233. Thr81 is a binding site for Mg(2+). A small ATPAse domain (RuvB-S) region spans residues 197–267 (EPEELALIIK…LAAEALDIYQ (71 aa)). Residues 270 to 354 (PQGLDWTDRL…EEQLSIFSEQ (85 aa)) form a head domain (RuvB-H) region. DNA-binding residues include Arg325 and Arg330.

It belongs to the RuvB family. Homohexamer. Forms an RuvA(8)-RuvB(12)-Holliday junction (HJ) complex. HJ DNA is sandwiched between 2 RuvA tetramers; dsDNA enters through RuvA and exits via RuvB. An RuvB hexamer assembles on each DNA strand where it exits the tetramer. Each RuvB hexamer is contacted by two RuvA subunits (via domain III) on 2 adjacent RuvB subunits; this complex drives branch migration. In the full resolvosome a probable DNA-RuvA(4)-RuvB(12)-RuvC(2) complex forms which resolves the HJ.

The protein localises to the cytoplasm. It catalyses the reaction ATP + H2O = ADP + phosphate + H(+). The RuvA-RuvB-RuvC complex processes Holliday junction (HJ) DNA during genetic recombination and DNA repair, while the RuvA-RuvB complex plays an important role in the rescue of blocked DNA replication forks via replication fork reversal (RFR). RuvA specifically binds to HJ cruciform DNA, conferring on it an open structure. The RuvB hexamer acts as an ATP-dependent pump, pulling dsDNA into and through the RuvAB complex. RuvB forms 2 homohexamers on either side of HJ DNA bound by 1 or 2 RuvA tetramers; 4 subunits per hexamer contact DNA at a time. Coordinated motions by a converter formed by DNA-disengaged RuvB subunits stimulates ATP hydrolysis and nucleotide exchange. Immobilization of the converter enables RuvB to convert the ATP-contained energy into a lever motion, pulling 2 nucleotides of DNA out of the RuvA tetramer per ATP hydrolyzed, thus driving DNA branch migration. The RuvB motors rotate together with the DNA substrate, which together with the progressing nucleotide cycle form the mechanistic basis for DNA recombination by continuous HJ branch migration. Branch migration allows RuvC to scan DNA until it finds its consensus sequence, where it cleaves and resolves cruciform DNA. The polypeptide is Holliday junction branch migration complex subunit RuvB (Crocosphaera subtropica (strain ATCC 51142 / BH68) (Cyanothece sp. (strain ATCC 51142))).